The primary structure comprises 670 residues: Cyclic di-GMP phosphodiesterase PdeA (670 aa).

An EAL domain is found at 428-670 (QNKIFQYILK…GFLWHKPEPI (243 aa)).

It catalyses the reaction 3',3'-c-di-GMP + H2O = 5'-phosphoguanylyl(3'-&gt;5')guanosine + H(+). Functionally, phosphodiesterase (PDE) that catalyzes the hydrolysis of cyclic diguanylate (c-di-GMP) to pGpG. The polypeptide is Cyclic di-GMP phosphodiesterase PdeA (Borreliella burgdorferi (strain ATCC 35210 / DSM 4680 / CIP 102532 / B31) (Borrelia burgdorferi)).